Here is a 79-residue protein sequence, read N- to C-terminus: Small ribosomal subunit protein bS18 (79 aa).

It belongs to the bacterial ribosomal protein bS18 family. Part of the 30S ribosomal subunit. Forms a tight heterodimer with protein bS6.

Functionally, binds as a heterodimer with protein bS6 to the central domain of the 16S rRNA, where it helps stabilize the platform of the 30S subunit. This chain is Small ribosomal subunit protein bS18, found in Streptococcus pneumoniae (strain Hungary19A-6).